The sequence spans 172 residues: 3-phenylpropionate/cinnamic acid dioxygenase subunit beta (172 aa).

This sequence belongs to the bacterial ring-hydroxylating dioxygenase beta subunit family. In terms of assembly, this dioxygenase system consists of four proteins: the two subunits of the hydroxylase component (HcaE and HcaF), a ferredoxin (HcaC) and a ferredoxin reductase (HcaD).

It carries out the reaction 3-phenylpropanoate + NADH + O2 + H(+) = 3-(cis-5,6-dihydroxycyclohexa-1,3-dien-1-yl)propanoate + NAD(+). The catalysed reaction is (E)-cinnamate + NADH + O2 + H(+) = (2E)-3-(cis-5,6-dihydroxycyclohexa-1,3-dien-1-yl)prop-2-enoate + NAD(+). Its pathway is aromatic compound metabolism; 3-phenylpropanoate degradation. Its function is as follows. Part of the multicomponent 3-phenylpropionate dioxygenase. Converts 3-phenylpropionic acid (PP) and cinnamic acid (CI) into 3-phenylpropionate-dihydrodiol (PP-dihydrodiol) and cinnamic acid-dihydrodiol (CI-dihydrodiol), respectively. The protein is 3-phenylpropionate/cinnamic acid dioxygenase subunit beta of Escherichia coli O17:K52:H18 (strain UMN026 / ExPEC).